The primary structure comprises 64 residues: Bubble protein (64 aa).

Intrachain disulfides connect C3–C30, C18–C38, C28–C54, and C49–C64.

It is found in the secreted. Its function is as follows. May act as a toxin. May recognize a molecule or part of a molecule with a negatively charged surface potential. The sequence is that of Bubble protein from Penicillium brevicompactum.